The primary structure comprises 175 residues: RNA pyrophosphohydrolase (175 aa).

One can recognise a Nudix hydrolase domain in the interval 6–149 (GYRPNVGIVI…KRDVYRRVMK (144 aa)). Positions 38–59 (GGINPGETPEQAMYRELFEEVG) match the Nudix box motif.

It belongs to the Nudix hydrolase family. RppH subfamily. A divalent metal cation is required as a cofactor.

In terms of biological role, accelerates the degradation of transcripts by removing pyrophosphate from the 5'-end of triphosphorylated RNA, leading to a more labile monophosphorylated state that can stimulate subsequent ribonuclease cleavage. This is RNA pyrophosphohydrolase from Yersinia pseudotuberculosis serotype O:1b (strain IP 31758).